We begin with the raw amino-acid sequence, 206 residues long: Cytochrome c (206 aa).

3 consecutive transmembrane segments (helical) span residues 10-30 (IALAVGGAVLMGALFFSVSFL), 49-69 (FMGWFLLIFCASIIIMGLGKM), and 76-96 (KWFLSFPLSIFVIVMVMFLSL). 4 residues coordinate heme: Cys-152, Cys-155, His-156, and Met-182.

In terms of assembly, monomer. Component of the photosynthetic reaction center composed of protein subunits PscA, PscC, PscB and PscD. The reaction center interacts with FmoA (which forms the Fenna-Matthews-Olson (FMO) complex). The reaction center/FmoA complex has two PscA subunits, one PscB and one PscD subunit, probably two FmoA complexes and at least one PscC subunit. Binds 1 heme group per subunit.

It is found in the cell inner membrane. Its function is as follows. Monoheme cytochrome which is the immediate electron donor to P840 of the photosynthetic reaction center complex. This Chlorobaculum tepidum (strain ATCC 49652 / DSM 12025 / NBRC 103806 / TLS) (Chlorobium tepidum) protein is Cytochrome c (pscC).